A 432-amino-acid chain; its full sequence is Transcriptional adapter 3 (432 aa).

K21 is covalently cross-linked (Glycyl lysine isopeptide (Lys-Gly) (interchain with G-Cter in SUMO2)). A coiled-coil region spans residues 40–69; it reads IEELDTLQLELETLLSSASRRLRVLEAETQ. A disordered region spans residues 87 to 126; sequence GRDHELGAPPKHGKPKKQKLEGKAGHGPGPGPGRPKSKNL. A Glycyl lysine isopeptide (Lys-Gly) (interchain with G-Cter in SUMO2) cross-link involves residue K129. Residues 272–319 are disordered; sequence NIISPMEDSPIPDMSGKESGADGASTSPRNQNKPFSVPHTKSLESRIK. 2 positions are modified to phosphoserine: S280 and S298. Residues 295–305 show a composition bias toward polar residues; it reads ASTSPRNQNKP. The stretch at 367–407 forms a coiled coil; the sequence is LLRLAKEEVSRQELRQRVRMADNEVMDAFRKIMAARQKKRT. K418 carries the N6-acetyllysine modification.

Belongs to the NGG1 family. In terms of assembly, the PCAF complex is composed of a number of TBP-associated factors (TAFS), such as TAF5, TAF5L, TAF6, TAF6L, TAF9, TAF10 and TAF12, PCAF, and also PCAF-associated factors (PAFs), such as TADA2L/ADA2, TADA3L/ADA3 and SPT3. Interacts directly with TADA2L and PCAF and also with the high-risk HPV oncoprotein E6. Component of the STAGA transcription coactivator-HAT complex, at least composed of SUPT3H, GCN5L2, TAF5L, TAF6L, SUPT7L, TADA3L, TAD1L, TAF10, TAF12, TRRAP and TAF9. Component of the TFTC-HAT complex. Component of the ADA2A-containing complex (ATAC), composed of KAT14, KAT2A, TADA2L, TADA3L, ZZ3, MBIP, WDR5, YEATS2, CCDC101 and DR1. Ubiquitously expressed.

The protein resides in the nucleus. Functions as a component of the PCAF complex. The PCAF complex is capable of efficiently acetylating histones in a nucleosomal context. The PCAF complex could be considered as the human version of the yeast SAGA complex. Also known as a coactivator for p53/TP53-dependent transcriptional activation. Component of the ATAC complex, a complex with histone acetyltransferase activity on histones H3 and H4. The chain is Transcriptional adapter 3 (TADA3) from Homo sapiens (Human).